Reading from the N-terminus, the 429-residue chain is Glutamate-1-semialdehyde 2,1-aminomutase 2 (429 aa).

An N6-(pyridoxal phosphate)lysine modification is found at Lys-268.

It belongs to the class-III pyridoxal-phosphate-dependent aminotransferase family. HemL subfamily. As to quaternary structure, homodimer. Requires pyridoxal 5'-phosphate as cofactor.

The protein localises to the cytoplasm. It catalyses the reaction (S)-4-amino-5-oxopentanoate = 5-aminolevulinate. The protein operates within porphyrin-containing compound metabolism; protoporphyrin-IX biosynthesis; 5-aminolevulinate from L-glutamyl-tRNA(Glu): step 2/2. The chain is Glutamate-1-semialdehyde 2,1-aminomutase 2 from Staphylococcus aureus (strain bovine RF122 / ET3-1).